The following is an 89-amino-acid chain: Neurotoxin LmNaTx28 (89 aa).

The first 18 residues, 1-18 (MNLPTVLCIIALILGVRS), serve as a signal peptide directing secretion. The LCN-type CS-alpha/beta domain occupies 20–85 (KNGFFTKLGK…VADSSEKACQ (66 aa)). Disulfide bonds link Cys33/Cys57, Cys43/Cys62, Cys47/Cys64, and Cys58/Cys84.

This sequence belongs to the long (4 C-C) scorpion toxin superfamily. Sodium channel inhibitor family. Beta subfamily. As to expression, expressed by the venom gland.

The protein resides in the secreted. In terms of biological role, binds voltage-independently at site-4 of sodium channels (Nav) and shift the voltage of activation toward more negative potentials thereby affecting sodium channel activation and promoting spontaneous and repetitive firing. The sequence is that of Neurotoxin LmNaTx28 from Lychas mucronatus (Chinese swimming scorpion).